Consider the following 1102-residue polypeptide: ATP-dependent DNA helicase MPH1 (1102 aa).

Positions 19-55 are disordered; the sequence is ALDKPATSGLHSREQEQQRDISNATPHTSTDLELEDF. Positions 38–49 are enriched in polar residues; the sequence is DISNATPHTSTD. Residues 147-315 form the Helicase ATP-binding domain; that stretch reads IVKNGLFNNT…DVIDNLGVSH (169 aa). 160 to 167 contacts ATP; sequence LPTGLGKT. The short motif at 263 to 266 is the DEAH box element; that stretch reads DEAH. The Helicase C-terminal domain occupies 490 to 651; it reads NLLNYFMDAG…GSRFNFRHDL (162 aa). 4 disordered regions span residues 672–702, 720–743, 818–837, and 858–1102; these read PIEN…FNMP, ASKT…DEIS, SQGI…KSRY, and SGRK…SESG. A compositionally biased stretch (basic residues) spans 687 to 699; the sequence is RSTRGKKASKKKF. A compositionally biased stretch (basic and acidic residues) spans 822–837; it reads ETRHTKPHGDTDKSRY. Residues 1003–1019 show a composition bias toward low complexity; it reads SSGAASKSGSTASTAAK. Over residues 1069 to 1082 the composition is skewed to acidic residues; that stretch reads SDDDDDDNDDEDDV.

It belongs to the DEAD box helicase family. DEAH subfamily. FANCM sub-subfamily. As to quaternary structure, interacts with the MHF histone-fold complex to form the FANCM-MHF complex.

It localises to the nucleus. It carries out the reaction ATP + H2O = ADP + phosphate + H(+). ATP-dependent DNA helicase involved in DNA damage repair by homologous recombination and in genome maintenance. Capable of unwinding D-loops. Plays a role in limiting crossover recombinants during mitotic DNA double-strand break (DSB) repair. Component of a FANCM-MHF complex which promotes gene conversion at blocked replication forks, probably by reversal of the stalled fork. The sequence is that of ATP-dependent DNA helicase MPH1 from Pyricularia oryzae (strain 70-15 / ATCC MYA-4617 / FGSC 8958) (Rice blast fungus).